A 441-amino-acid chain; its full sequence is Zinc finger protein ZIC 3 (441 aa).

Residues 222 to 257 (LSCKWLEESTMNHPQKTCDRTFSSMHELVTHMTMEH) form a C2H2-type 1; atypical zinc finger. The C2H2-type 2; atypical zinc finger occupies 266 to 293 (HICYWEECPRGGKSFKAKYKLVNHIRVH). 3 consecutive C2H2-type zinc fingers follow at residues 299–323 (FPCPFPGCGKIFARSENLKIHKRTH), 329–353 (FKCEFEGCDRRFANSSDRKKHMHVH), and 359–381 (YICKVCDKSYTHPSSLRKHMKVH). Positions 375–441 (RKHMKVHESQ…LPPNFNEWYV (67 aa)) are disordered. Positions 383-399 (SQGSDSSPAASSGYESA) are enriched in low complexity. The segment covering 406 to 429 (SANSEEPSKNSSATHQTNNNSHNT) has biased composition (polar residues).

This sequence belongs to the GLI C2H2-type zinc-finger protein family. As to expression, first detected at early gastrula (stage 10.25) in the dorsal lip and prospective neural plate. Also expressed in the mesoderm at early gastrulation, with expression strongest on the dorsal side. Mesodermal expression continues at stage 12 but is hardly detectable after stage 14. As gastrulation proceeds, expression decreases in the dorsal lip and increases in the prospective neural plate. At the neural plate stage (stage 14), expressed strongly in the prospective mesencephalon and anterior rhombencephalon, after which expression becomes stronger in the anterior neural folds. At early tailbud stage (stage 20), expression becomes restricted to the dorsal region of forebrain, midbrain and hindbrain, and weakly to the dorsal trunk. After mid-tailbud stage, expression decreases in the diencephalon, appears in the lateral mesoderm of the tailbud region and becomes restricted in the dorsal part of the neural tube.

Its subcellular location is the nucleus. The protein localises to the cytoplasm. Its function is as follows. Probably acts as a transcriptional activator. May bind to the minimal GLI-consensus sequence 5'-GGGTGGTC-3'. Can determine the ectodermal cell fate and promote the earliest step of neural and neural crest development. Involved in establishing left-right asymmetry in the embryo. The protein is Zinc finger protein ZIC 3 (zic3) of Xenopus laevis (African clawed frog).